A 510-amino-acid chain; its full sequence is Lysine--tRNA ligase (510 aa).

Residues E420 and E427 each coordinate Mg(2+).

Belongs to the class-II aminoacyl-tRNA synthetase family. Homodimer. Mg(2+) is required as a cofactor.

It is found in the cytoplasm. The catalysed reaction is tRNA(Lys) + L-lysine + ATP = L-lysyl-tRNA(Lys) + AMP + diphosphate. This is Lysine--tRNA ligase (lysS) from Vibrio cholerae serotype O1 (strain ATCC 39315 / El Tor Inaba N16961).